A 692-amino-acid polypeptide reads, in one-letter code: Elongation factor G (692 aa).

Positions 8 to 282 constitute a tr-type G domain; sequence ENTRNIGIMA…GVVDYLPSPV (275 aa). Residues 17-24, 81-85, and 135-138 contribute to the GTP site; these read AHIDAGKT, DTPGH, and NKMD.

Belongs to the TRAFAC class translation factor GTPase superfamily. Classic translation factor GTPase family. EF-G/EF-2 subfamily.

Its subcellular location is the cytoplasm. In terms of biological role, catalyzes the GTP-dependent ribosomal translocation step during translation elongation. During this step, the ribosome changes from the pre-translocational (PRE) to the post-translocational (POST) state as the newly formed A-site-bound peptidyl-tRNA and P-site-bound deacylated tRNA move to the P and E sites, respectively. Catalyzes the coordinated movement of the two tRNA molecules, the mRNA and conformational changes in the ribosome. This chain is Elongation factor G, found in Anoxybacillus flavithermus (strain DSM 21510 / WK1).